The sequence spans 184 residues: uncharacterized protein (184 aa).

This is an uncharacterized protein from Dictyostelium discoideum (Social amoeba).